The sequence spans 61 residues: Small ribosomal subunit protein eS31 (61 aa).

C22, C25, C38, and C41 together coordinate Zn(2+). A C4-type zinc finger spans residues 22-41; sequence CPRCGSFMAEHKDRYHCGKC.

It belongs to the eukaryotic ribosomal protein eS31 family. In terms of assembly, part of the 30S ribosomal subunit. The cofactor is Zn(2+).

This Nanoarchaeum equitans (strain Kin4-M) protein is Small ribosomal subunit protein eS31.